Here is a 172-residue protein sequence, read N- to C-terminus: Cyclin-L1 (172 aa).

The segment at Met1–Thr36 is disordered. The segment at Glu88–Leu168 is cyclin-like.

Belongs to the cyclin family. Cyclin L subfamily. Interacts with POLR2A via its hyperphosphorylated C-terminal domain (CTD). Interacts with CDK11A, CDK11B, CDK12 and CDK13. May form a ternary complex with CDK11B and casein kinase II (CKII). Interacts with pre-mRNA-splicing factors, including at least SRSF1, SRSF2 and SRSF7/SLU7.

It localises to the nucleus speckle. Its subcellular location is the nucleus. The protein localises to the nucleoplasm. Its function is as follows. Involved in pre-mRNA splicing. Functions in association with cyclin-dependent kinases (CDKs). May play a role in the regulation of RNA polymerase II (pol II). Inhibited by the CDK-specific inhibitor CDKN1A/p21. The protein is Cyclin-L1 (CCNL1) of Pongo abelii (Sumatran orangutan).